Here is a 418-residue protein sequence, read N- to C-terminus: Histidine--tRNA ligase (418 aa).

It belongs to the class-II aminoacyl-tRNA synthetase family. As to quaternary structure, homodimer.

It is found in the cytoplasm. It carries out the reaction tRNA(His) + L-histidine + ATP = L-histidyl-tRNA(His) + AMP + diphosphate + H(+). The sequence is that of Histidine--tRNA ligase from Thermoanaerobacter pseudethanolicus (strain ATCC 33223 / 39E) (Clostridium thermohydrosulfuricum).